The following is a 489-amino-acid chain: COX3 mRNA-specific translational activator PET494 (489 aa).

It localises to the mitochondrion inner membrane. Its function is as follows. Required for the expression of the mitochondrial gene for cytochrome c oxidase subunit III (COX3). The protein is COX3 mRNA-specific translational activator PET494 (PET494) of Saccharomyces bayanus (Yeast).